A 250-amino-acid polypeptide reads, in one-letter code: 2,3-bisphosphoglycerate-dependent phosphoglycerate mutase (250 aa).

Substrate is bound by residues 10–17 (RHGESQWN), 23–24 (TG), arginine 62, 89–92 (ERHY), lysine 100, 116–117 (RR), and 185–186 (GN). Histidine 11 serves as the catalytic Tele-phosphohistidine intermediate. The active-site Proton donor/acceptor is the glutamate 89.

The protein belongs to the phosphoglycerate mutase family. BPG-dependent PGAM subfamily. Homodimer.

It catalyses the reaction (2R)-2-phosphoglycerate = (2R)-3-phosphoglycerate. The protein operates within carbohydrate degradation; glycolysis; pyruvate from D-glyceraldehyde 3-phosphate: step 3/5. In terms of biological role, catalyzes the interconversion of 2-phosphoglycerate and 3-phosphoglycerate. In Salmonella paratyphi A (strain ATCC 9150 / SARB42), this protein is 2,3-bisphosphoglycerate-dependent phosphoglycerate mutase.